Consider the following 296-residue polypeptide: Cell surface glycoprotein CD200 receptor 3 (296 aa).

The signal sequence occupies residues 1 to 25 (MHALGRTLALMLLIFITILVPESSC). The Extracellular portion of the chain corresponds to 26–245 (SVKGREEIPP…NRGTTSILPS (220 aa)). The 115-residue stretch at 48-162 (PDGVGVTMEI…GIFQERHSIQ (115 aa)) folds into the Ig-like V-type domain. Cys-75 and Cys-146 form a disulfide bridge. In terms of domain architecture, Ig-like C2-type spans 151 to 232 (TDGIFQERHS…SHLTDNWILS (82 aa)). N-linked (GlcNAc...) asparagine glycosylation is found at Asn-167 and Asn-199. Residues Cys-172 and Cys-220 are joined by a disulfide bond. A helical membrane pass occupies residues 246 to 266 (LLSILYVKLAVTVLIVGFAFF). At 267–296 (QKRNYFSSRDLVFMKERRSKRSVWQREALG) the chain is on the cytoplasmic side.

The protein belongs to the CD200R family. Isoform 3 interacts with TYROBP. Isoform 8 does not interact with TYROBP. Expressed in uterus and bone marrow-derived mast cells (at protein level). Expressed in uterus, spleen, bone marrow-derived dendritic, basophil and mast cells. Expressed in the lung of N.brasiliensis-infected mice. Weakly expressed in brain, testis, lung and thymus.

Its subcellular location is the membrane. Functionally, according to PubMed:15187158 isoform 4 is a receptor for the CD200 cell surface glycoprotein. According to PubMed:16081818 isoform 4 is not a receptor for the CD200/OX2 cell surface glycoprotein. Isoform 1, isoform 2 and isoform 3 are involved in the recruitment or surface expression of the TYROBP receptor. Isoform 6, isoform 7 and isoform 8 are not involved in the recruitment or surface expression of the TYROBP receptor. The protein is Cell surface glycoprotein CD200 receptor 3 (Cd200r3) of Mus musculus (Mouse).